A 1391-amino-acid polypeptide reads, in one-letter code: DNA-directed RNA polymerase subunit beta' (1391 aa).

Cys-70, Cys-72, Cys-85, and Cys-88 together coordinate Zn(2+). Positions 461, 463, and 465 each coordinate Mg(2+). Zn(2+) is bound by residues Cys-809, Cys-882, Cys-889, and Cys-892.

It belongs to the RNA polymerase beta' chain family. The RNAP catalytic core consists of 2 alpha, 1 beta, 1 beta' and 1 omega subunit. When a sigma factor is associated with the core the holoenzyme is formed, which can initiate transcription. The cofactor is Mg(2+). It depends on Zn(2+) as a cofactor.

The catalysed reaction is RNA(n) + a ribonucleoside 5'-triphosphate = RNA(n+1) + diphosphate. DNA-dependent RNA polymerase catalyzes the transcription of DNA into RNA using the four ribonucleoside triphosphates as substrates. The polypeptide is DNA-directed RNA polymerase subunit beta' (Zymomonas mobilis subsp. mobilis (strain ATCC 31821 / ZM4 / CP4)).